The following is a 264-amino-acid chain: Phosphonoacetaldehyde hydrolase (264 aa).

Residue D9 is the Nucleophile of the active site. Positions 9 and 11 each coordinate Mg(2+). The active-site Schiff-base intermediate with substrate is the K50. Mg(2+) is bound at residue D183.

It belongs to the HAD-like hydrolase superfamily. PhnX family. In terms of assembly, homodimer. The cofactor is Mg(2+).

The catalysed reaction is phosphonoacetaldehyde + H2O = acetaldehyde + phosphate + H(+). Functionally, involved in phosphonate degradation. This is Phosphonoacetaldehyde hydrolase (phnX) from Bacillus cereus.